The sequence spans 101 residues: Small ribosomal subunit protein uS14 (101 aa).

This sequence belongs to the universal ribosomal protein uS14 family. In terms of assembly, part of the 30S ribosomal subunit. Contacts proteins S3 and S10.

In terms of biological role, binds 16S rRNA, required for the assembly of 30S particles and may also be responsible for determining the conformation of the 16S rRNA at the A site. This chain is Small ribosomal subunit protein uS14, found in Cupriavidus necator (strain ATCC 17699 / DSM 428 / KCTC 22496 / NCIMB 10442 / H16 / Stanier 337) (Ralstonia eutropha).